A 576-amino-acid polypeptide reads, in one-letter code: Arginine--tRNA ligase (576 aa).

The 'HIGH' region motif lies at 126–136; the sequence is ANPTGPMHIGH.

Belongs to the class-I aminoacyl-tRNA synthetase family. Monomer.

It is found in the cytoplasm. It catalyses the reaction tRNA(Arg) + L-arginine + ATP = L-arginyl-tRNA(Arg) + AMP + diphosphate. In Rickettsia typhi (strain ATCC VR-144 / Wilmington), this protein is Arginine--tRNA ligase.